The following is a 177-amino-acid chain: Protein Flattop (177 aa).

The disordered stretch occupies residues 113–177; that stretch reads ILGKPHDPDS…TPGPQRPAKS (65 aa). Over residues 115-124 the composition is skewed to basic and acidic residues; that stretch reads GKPHDPDSQK. The segment covering 132 to 163 has biased composition (polar residues); that stretch reads TKTVQQARSPTIIPSSPAANLNSPDELQSSHP.

This sequence belongs to the Flattop family. Microtubule inner protein component of sperm flagellar doublet microtubules. Interacts with DLG3. Expressed in airway epithelial cells.

The protein localises to the cytoplasm. It localises to the cytoskeleton. The protein resides in the cilium basal body. It is found in the cell projection. Its subcellular location is the cilium. The protein localises to the apical cell membrane. It localises to the cilium axoneme. The protein resides in the flagellum axoneme. Its function is as follows. Microtubule inner protein (MIP) part of the dynein-decorated doublet microtubules (DMTs) in cilia axoneme. Acts as a regulator of cilium basal body docking and positioning in mono- and multiciliated cells. Regulates basal body docking and cilia formation in multiciliated lung cells. Regulates kinocilium positioning and stereocilia bundle morphogenesis in the inner ear. This chain is Protein Flattop, found in Homo sapiens (Human).